Here is a 462-residue protein sequence, read N- to C-terminus: Cytochrome P450 20A1 (462 aa).

A helical transmembrane segment spans residues 4-24 (FAIFAVTFLLALVGAVLYLYP). Position 409 (Cys-409) interacts with heme.

Belongs to the cytochrome P450 family. Requires heme as cofactor.

It is found in the membrane. This chain is Cytochrome P450 20A1 (Cyp20a1), found in Mus musculus (Mouse).